Consider the following 153-residue polypeptide: Probable phospholipase A2 homolog 2 (153 aa).

The N-terminal stretch at M1 to G25 is a signal peptide. Intrachain disulfides connect C42-C70, C46-C76, C51-C123, C63-C83, C82-C109, and C89-C102. Ca(2+) is bound by residues Y62, G64, and Y67. H86 is an active-site residue. Position 87 (D87) interacts with Ca(2+).

It belongs to the phospholipase A2 family. Ca(2+) is required as a cofactor.

It is found in the secreted. It carries out the reaction a 1,2-diacyl-sn-glycero-3-phosphocholine + H2O = a 1-acyl-sn-glycero-3-phosphocholine + a fatty acid + H(+). In terms of biological role, PA2 catalyzes the calcium-dependent hydrolysis of the 2-acyl groups in 3-sn-phosphoglycerides. Releases lysophospholipids (LPLs) and free fatty acids (FFAs) from membrane phospholipids in response to hormones and other external stimuli. This is Probable phospholipase A2 homolog 2 (PLA2-II) from Oryza sativa subsp. japonica (Rice).